We begin with the raw amino-acid sequence, 139 residues long: ATP synthase epsilon chain (139 aa).

This sequence belongs to the ATPase epsilon chain family. In terms of assembly, F-type ATPases have 2 components, CF(1) - the catalytic core - and CF(0) - the membrane proton channel. CF(1) has five subunits: alpha(3), beta(3), gamma(1), delta(1), epsilon(1). CF(0) has three main subunits: a, b and c.

Its subcellular location is the cell inner membrane. Its function is as follows. Produces ATP from ADP in the presence of a proton gradient across the membrane. The chain is ATP synthase epsilon chain from Shigella boydii serotype 18 (strain CDC 3083-94 / BS512).